The chain runs to 501 residues: Ribose import ATP-binding protein RbsA (501 aa).

2 consecutive ABC transporter domains span residues 6–242 (LQLS…VGRK) and 253–495 (VHGQ…VGKK). 38 to 45 (GENGAGKS) provides a ligand contact to ATP.

The protein belongs to the ABC transporter superfamily. Ribose importer (TC 3.A.1.2.1) family. In terms of assembly, the complex is composed of an ATP-binding protein (RbsA), two transmembrane proteins (RbsC) and a solute-binding protein (RbsB).

It localises to the cell inner membrane. The catalysed reaction is D-ribose(out) + ATP + H2O = D-ribose(in) + ADP + phosphate + H(+). Its function is as follows. Part of the ABC transporter complex RbsABC involved in ribose import. Responsible for energy coupling to the transport system. This is Ribose import ATP-binding protein RbsA from Vibrio vulnificus (strain CMCP6).